Consider the following 651-residue polypeptide: Acetyl-coenzyme A synthetase (651 aa).

Residues 191–194 (RGGK), Thr311, and Asn335 each bind CoA. ATP-binding positions include 387–389 (GEP), 411–416 (DTWWQT), Asp500, and Arg515. Ser523 contributes to the CoA binding site. ATP is bound at residue Arg526. Residues Val537, His539, and Val542 each coordinate Mg(2+). Residue Arg584 coordinates CoA. Lys609 is modified (N6-acetyllysine).

Belongs to the ATP-dependent AMP-binding enzyme family. Mg(2+) serves as cofactor. In terms of processing, acetylated. Deacetylation by the SIR2-homolog deacetylase activates the enzyme.

The enzyme catalyses acetate + ATP + CoA = acetyl-CoA + AMP + diphosphate. Catalyzes the conversion of acetate into acetyl-CoA (AcCoA), an essential intermediate at the junction of anabolic and catabolic pathways. AcsA undergoes a two-step reaction. In the first half reaction, AcsA combines acetate with ATP to form acetyl-adenylate (AcAMP) intermediate. In the second half reaction, it can then transfer the acetyl group from AcAMP to the sulfhydryl group of CoA, forming the product AcCoA. In Pseudomonas syringae pv. tomato (strain ATCC BAA-871 / DC3000), this protein is Acetyl-coenzyme A synthetase.